Here is a 537-residue protein sequence, read N- to C-terminus: Membrane protein insertase YidC (537 aa).

5 helical membrane-spanning segments follow: residues 6–26 (SLLA…WEID), 341–363 (LVSN…LYPL), 411–431 (LGGC…YWTF), 449–469 (LSAQ…MFLL), and 490–510 (PVIF…YWLV).

This sequence belongs to the OXA1/ALB3/YidC family. Type 1 subfamily. As to quaternary structure, interacts with the Sec translocase complex via SecD. Specifically interacts with transmembrane segments of nascent integral membrane proteins during membrane integration.

It localises to the cell inner membrane. Functionally, required for the insertion and/or proper folding and/or complex formation of integral membrane proteins into the membrane. Involved in integration of membrane proteins that insert both dependently and independently of the Sec translocase complex, as well as at least some lipoproteins. Aids folding of multispanning membrane proteins. This Actinobacillus succinogenes (strain ATCC 55618 / DSM 22257 / CCUG 43843 / 130Z) protein is Membrane protein insertase YidC.